We begin with the raw amino-acid sequence, 262 residues long: MKIHDFKNKKQEQKKISMLTCYDYPSACIIANSNIHCVLVGDSVAMAVHGHPTTIMATIEMMELHTQAVARGLGKQFLITDLPFLGHKSSQGHTVENVKRLLQAGAQAVKIEGADKDTCQTISHLVNAGIPVMGHIGLTPQSIHQLGGYKVQGKNSEQAETLLQQADALEQAGCFAVVIECVPQGLAKTITDSLVIPTIGIGAGPGTDGQVLVWHDMLGLQTSFNPKFVKKYFRAKDHFIEALNSYVQQVQQMHFPANEHSF.

Positions 42 and 81 each coordinate Mg(2+). 3-methyl-2-oxobutanoate is bound by residues 42–43 (DS), aspartate 81, and lysine 110. Residue glutamate 112 participates in Mg(2+) binding. Glutamate 180 functions as the Proton acceptor in the catalytic mechanism.

The protein belongs to the PanB family. As to quaternary structure, homodecamer; pentamer of dimers. Mg(2+) is required as a cofactor.

Its subcellular location is the cytoplasm. The catalysed reaction is 3-methyl-2-oxobutanoate + (6R)-5,10-methylene-5,6,7,8-tetrahydrofolate + H2O = 2-dehydropantoate + (6S)-5,6,7,8-tetrahydrofolate. The protein operates within cofactor biosynthesis; (R)-pantothenate biosynthesis; (R)-pantoate from 3-methyl-2-oxobutanoate: step 1/2. Functionally, catalyzes the reversible reaction in which hydroxymethyl group from 5,10-methylenetetrahydrofolate is transferred onto alpha-ketoisovalerate to form ketopantoate. This is 3-methyl-2-oxobutanoate hydroxymethyltransferase from Legionella pneumophila (strain Corby).